A 485-amino-acid chain; its full sequence is Glutamyl-tRNA(Gln) amidotransferase subunit A (485 aa).

Active-site charge relay system residues include lysine 79 and serine 154. Catalysis depends on serine 178, which acts as the Acyl-ester intermediate.

Belongs to the amidase family. GatA subfamily. In terms of assembly, heterotrimer of A, B and C subunits.

It catalyses the reaction L-glutamyl-tRNA(Gln) + L-glutamine + ATP + H2O = L-glutaminyl-tRNA(Gln) + L-glutamate + ADP + phosphate + H(+). Allows the formation of correctly charged Gln-tRNA(Gln) through the transamidation of misacylated Glu-tRNA(Gln) in organisms which lack glutaminyl-tRNA synthetase. The reaction takes place in the presence of glutamine and ATP through an activated gamma-phospho-Glu-tRNA(Gln). This is Glutamyl-tRNA(Gln) amidotransferase subunit A from Clostridium botulinum (strain Okra / Type B1).